A 537-amino-acid chain; its full sequence is Synaptotagmin-2 (537 aa).

At 1-2 (MG) the chain is on the cytoplasmic side. A helical membrane pass occupies residues 3–23 (IISTILGVIGFGFGTTIGIVI). Topologically, residues 24 to 537 (GYYLFIYFQS…QIELQWRNSS (514 aa)) are lumenal. The SMP-LTD domain occupies 67–249 (DFDRIDWLNK…WPKTLNVQIM (183 aa)). The tract at residues 227-505 (QEIIKDQVAN…TLGYVVINLG (279 aa)) is phospholipid binding. C2 domains lie at 240 to 362 (WPKT…LMTL) and 402 to 517 (DPNA…NDKY). Residues aspartate 276, aspartate 282, aspartate 332, and glutamate 334 each coordinate Ca(2+).

It belongs to the synaptotagmin family. It depends on Ca(2+) as a cofactor.

The protein localises to the golgi apparatus membrane. Its function is as follows. May play an important role in regulating an unconventional protein trafficking from the cytosol to the extracellular matrix. This is Synaptotagmin-2 (SYT2) from Arabidopsis thaliana (Mouse-ear cress).